A 500-amino-acid polypeptide reads, in one-letter code: Cytochrome P450 2D4 (500 aa).

Residue cysteine 446 participates in heme binding.

It belongs to the cytochrome P450 family. It depends on heme as a cofactor. As to expression, brain.

The protein resides in the endoplasmic reticulum membrane. Its subcellular location is the microsome membrane. The enzyme catalyses an organic molecule + reduced [NADPH--hemoprotein reductase] + O2 = an alcohol + oxidized [NADPH--hemoprotein reductase] + H2O + H(+). Its function is as follows. Cytochromes P450 are a group of heme-thiolate monooxygenases. In liver microsomes, this enzyme is involved in an NADPH-dependent electron transport pathway. It oxidizes a variety of structurally unrelated compounds, including steroids, fatty acids, and xenobiotics. The sequence is that of Cytochrome P450 2D4 (Cyp2d4) from Rattus norvegicus (Rat).